A 155-amino-acid polypeptide reads, in one-letter code: Ribosome maturation factor RimP (155 aa).

Belongs to the RimP family.

It localises to the cytoplasm. Required for maturation of 30S ribosomal subunits. In Listeria innocua serovar 6a (strain ATCC BAA-680 / CLIP 11262), this protein is Ribosome maturation factor RimP.